The following is a 583-amino-acid chain: NEDD4-binding protein 2-like 2 (583 aa).

The stretch at 162-197 forms a coiled coil; it reads NSEKSEIDNELFQFYKEIEELEKEKDGFENSCKESE. Positions 549–575 are disordered; the sequence is EPSHKSTQRPPPPQGRQRWGGSLGSHN.

The chain is NEDD4-binding protein 2-like 2 (N4BP2L2) from Homo sapiens (Human).